The following is a 242-amino-acid chain: Probable transcriptional regulatory protein NMA1902 (242 aa).

Belongs to the TACO1 family.

It localises to the cytoplasm. In Neisseria meningitidis serogroup A / serotype 4A (strain DSM 15465 / Z2491), this protein is Probable transcriptional regulatory protein NMA1902.